The primary structure comprises 317 residues: uncharacterized protein (317 aa).

Residues 29–86 (IDLNLLTIFEAVYVHKGIVNAAKVLNLTPSAISQSIQKLRVIFPDPLFIRKGQGVTPT) form the HTH lysR-type domain. A DNA-binding region (H-T-H motif) is located at residues 46 to 65 (IVNAAKVLNLTPSAISQSIQ).

Belongs to the LysR transcriptional regulatory family.

This is an uncharacterized protein from Escherichia coli (strain K12).